The primary structure comprises 459 residues: Ribulose bisphosphate carboxylase large chain (459 aa).

An N6,N6,N6-trimethyllysine modification is found at Lys4. The substrate site is built by Asn113 and Thr163. The active-site Proton acceptor is the Lys165. Lys167 is a substrate binding site. The Mg(2+) site is built by Lys191, Asp193, and Glu194. An N6-carboxylysine modification is found at Lys191. His284 serves as the catalytic Proton acceptor. Residues Arg285, His317, and Ser369 each contribute to the substrate site.

The protein belongs to the RuBisCO large chain family. Type I subfamily. Heterohexadecamer of 8 large chains and 8 small chains; disulfide-linked. The disulfide link is formed within the large subunit homodimers. Mg(2+) serves as cofactor. In terms of processing, the disulfide bond which can form in the large chain dimeric partners within the hexadecamer appears to be associated with oxidative stress and protein turnover.

Its subcellular location is the plastid. The protein localises to the chloroplast. The catalysed reaction is 2 (2R)-3-phosphoglycerate + 2 H(+) = D-ribulose 1,5-bisphosphate + CO2 + H2O. It carries out the reaction D-ribulose 1,5-bisphosphate + O2 = 2-phosphoglycolate + (2R)-3-phosphoglycerate + 2 H(+). Its function is as follows. RuBisCO catalyzes two reactions: the carboxylation of D-ribulose 1,5-bisphosphate, the primary event in carbon dioxide fixation, as well as the oxidative fragmentation of the pentose substrate in the photorespiration process. Both reactions occur simultaneously and in competition at the same active site. This Micranthes integrifolia (Wholeleaf saxifrage) protein is Ribulose bisphosphate carboxylase large chain.